Consider the following 179-residue polypeptide: Riboflavin kinase (179 aa).

61–66 (GDGEGR) serves as a coordination point for CDP. Mg(2+) contacts are provided by Thr90 and Asn92. Residues Thr147 and Glu155 each contribute to the FMN site. 160-163 (VELR) contacts CDP.

The protein belongs to the archaeal riboflavin kinase family. Mg(2+) is required as a cofactor.

It catalyses the reaction riboflavin + CTP = CDP + FMN + H(+). The protein operates within cofactor biosynthesis; FMN biosynthesis; FMN from riboflavin (CTP route): step 1/1. In terms of biological role, catalyzes the CTP-dependent phosphorylation of riboflavin (vitamin B2) to form flavin mononucleotide (FMN). The sequence is that of Riboflavin kinase from Ignicoccus hospitalis (strain KIN4/I / DSM 18386 / JCM 14125).